The chain runs to 270 residues: HTH-type transcriptional activator AllS (270 aa).

The HTH lysR-type domain occupies 4–61 (LDPETLRTFVSVAETGSFSRAAEKLYKTTATISYRIKLLEDNTGVALFSRTTRSVLLT). A DNA-binding region (H-T-H motif) is located at residues 21 to 40 (FSRAAEKLYKTTATISYRIK).

This sequence belongs to the LysR transcriptional regulatory family.

Positive regulator essential for the expression of allD operon. Binds to the allD promoter. In Klebsiella pneumoniae, this protein is HTH-type transcriptional activator AllS (allS).